Reading from the N-terminus, the 224-residue chain is Flagellar L-ring protein (224 aa).

An N-terminal signal peptide occupies residues 1–15 (MIKYIALASVVLLVG). Cys16 carries N-palmitoyl cysteine lipidation. The S-diacylglycerol cysteine moiety is linked to residue Cys16.

Belongs to the FlgH family. In terms of assembly, the basal body constitutes a major portion of the flagellar organelle and consists of four rings (L,P,S, and M) mounted on a central rod.

The protein resides in the cell outer membrane. It is found in the bacterial flagellum basal body. In terms of biological role, assembles around the rod to form the L-ring and probably protects the motor/basal body from shearing forces during rotation. The polypeptide is Flagellar L-ring protein (Shewanella frigidimarina (strain NCIMB 400)).